A 258-amino-acid chain; its full sequence is Archaerhodopsin-3 (258 aa).

Positions 1 to 6 (MDPIAL) are excised as a propeptide. Glutamine 7 carries the post-translational modification Pyrrolidone carboxylic acid. At 7-18 (QAGYDLLGDGRP) the chain is on the extracellular side. Residues 19-40 (ETLWLGIGTLLMLIGTFYFLVR) form a helical membrane-spanning segment. At 41–49 (GWGVTDKDA) the chain is on the cytoplasmic side. The chain crosses the membrane as a helical span at residues 50–71 (REYYAVTILVPGIASAAYLSMF). The Extracellular portion of the chain corresponds to 72–89 (FGIGLTEVTVGGEMLDIY). A helical membrane pass occupies residues 90-111 (YARYADWLFTTPLLLLDLALLA). Residues 112–114 (KVD) are Cytoplasmic-facing. Residues 115–137 (RVTIGTLVGVDALMIVTGLIGAL) traverse the membrane as a helical segment. The Extracellular segment spans residues 138–141 (SHTA). The chain crosses the membrane as a helical span at residues 142 to 170 (IARYSWWLFSTICMIVVLYFLATSLRSAA). The Cytoplasmic segment spans residues 171 to 173 (KER). The chain crosses the membrane as a helical span at residues 174–202 (GPEVASTFNTLTALVLVLWTAYPILWIIG). Residues 203–210 (TEGAGVVG) are Extracellular-facing. Residues 211-243 (LGIETLLFMVLDVTAKVGFGFILLRSRAILGDT) form a helical membrane-spanning segment. At lysine 226 the chain carries N6-(retinylidene)lysine. Residues 244–258 (EAPEPSAGADVSAAD) lie on the Cytoplasmic side of the membrane.

Belongs to the archaeal/bacterial/fungal opsin family.

The protein localises to the cell membrane. Its function is as follows. Light-driven proton pump. The chain is Archaerhodopsin-3 (aop3) from Halorubrum sodomense.